A 635-amino-acid polypeptide reads, in one-letter code: Dual specificity protein kinase zak2 (635 aa).

2 consecutive Protein kinase domains span residues 9–249 and 299–585; these read WEEI…HRLI and NKDD…QIYF. Residues 15–23 and Lys45 each bind ATP; that span reads IGSCNSKSR. Asp124 functions as the Proton acceptor in the catalytic mechanism. Residues 305 to 313 and Lys326 each bind ATP; that span reads GGDGFFSVV. Asp427 functions as the Proton acceptor in the catalytic mechanism.

This sequence in the N-terminal section; belongs to the protein kinase superfamily. Ser/Thr protein kinase family. It in the C-terminal section; belongs to the protein kinase superfamily. TKL Tyr protein kinase family. C-terminal tyrosine kinase domain is capable of autophosphorylation, in vitro. In terms of tissue distribution, zakA and zak2 are coexpressed in prestalk cell population, zakA is enriched in pstB populations and zak1 in pstA populations. ZakA and zak2 are coexpressed in prespore cells, zakA expression levels are 10 fold higher than zak2.

It carries out the reaction L-seryl-[protein] + ATP = O-phospho-L-seryl-[protein] + ADP + H(+). The enzyme catalyses L-threonyl-[protein] + ATP = O-phospho-L-threonyl-[protein] + ADP + H(+). It catalyses the reaction L-tyrosyl-[protein] + ATP = O-phospho-L-tyrosyl-[protein] + ADP + H(+). Its function is as follows. Positive regulator of gsk3/gskA activity required for cell pattern formation and a downstream effector of carC. The kinases, gsk3/gskA, zakA and zak2, form part of a signaling pathway that responds to extracellular cyclic AMP. The pathway has a role in transcriptional regulation; required to direct prespore/spore fates during development. Zak2 negatively regulates prestalk differentiation by regulating expression of ecmA. Phosphorylates Y-214 of gsk3/gskA, in vitro. The protein is Dual specificity protein kinase zak2 (zak2) of Dictyostelium discoideum (Social amoeba).